The sequence spans 247 residues: Mannose-P-dolichol utilization defect 1 protein (247 aa).

Ala-2 is modified (N-acetylalanine). The next 7 helical transmembrane spans lie at 37-57, 74-94, 100-120, 128-145, 151-171, 185-205, and 213-233; these read CLKILLSKGLGLGIVAGSLLV, LSLQSVMLELVALTGTMVYSI, FSSWGEALFLMLQTITICFLV, VKGVAFLACYGLVLLVLL, LTVVTLLQASNVPAVVVGRLL, LSAITVFLLFGGSLARIFTSI, and MAGTFVVSSLCNGLIAAQLLF. One can recognise a PQ-loop 1 domain in the interval 39-105; it reads KILLSKGLGL…NNFPFSSWGE (67 aa). The region spanning 159–216 is the PQ-loop 2 domain; that stretch reads ASNVPAVVVGRLLQAATNYHNGHTGQLSAITVFLLFGGSLARIFTSIQETGDPLMAGT.

It belongs to the MPDU1 (TC 2.A.43.3) family.

It localises to the membrane. Functionally, required for normal utilization of mannose-dolichol phosphate (Dol-P-Man) in the synthesis of N-linked and O-linked oligosaccharides and GPI anchors. In Homo sapiens (Human), this protein is Mannose-P-dolichol utilization defect 1 protein (MPDU1).